The sequence spans 368 residues: Cytochrome b-c1 complex subunit 2, mitochondrial (368 aa).

The transit peptide at 1-16 directs the protein to the mitochondrion; it reads MLSAARLQFAQGSVRR. Phosphoserine occurs at positions 141 and 168.

Belongs to the peptidase M16 family. UQCRC2/QCR2 subfamily. As to quaternary structure, component of the ubiquinol-cytochrome c oxidoreductase (cytochrome b-c1 complex, complex III, CIII), a multisubunit enzyme composed of 10 subunits. The complex is composed of 3 respiratory subunits cytochrome b (COB), cytochrome c1 (CYT1) and Rieske protein (RIP1), 2 core protein subunits COR1 and QCR2, and 5 low-molecular weight protein subunits QCR6, QCR7, QCR8, QCR9 and QCR10. The complex exists as an obligatory dimer and forms supercomplexes (SCs) in the inner mitochondrial membrane with a monomer or a dimer of cytochrome c oxidase (complex IV, CIV), resulting in 2 different assemblies (supercomplexes III(2)IV and III(2)IV(2)).

The protein resides in the mitochondrion inner membrane. Its function is as follows. Component of the ubiquinol-cytochrome c oxidoreductase, a multisubunit transmembrane complex that is part of the mitochondrial electron transport chain which drives oxidative phosphorylation. The respiratory chain contains 3 multisubunit complexes succinate dehydrogenase (complex II, CII), ubiquinol-cytochrome c oxidoreductase (cytochrome b-c1 complex, complex III, CIII) and cytochrome c oxidase (complex IV, CIV), that cooperate to transfer electrons derived from NADH and succinate to molecular oxygen, creating an electrochemical gradient over the inner membrane that drives transmembrane transport and the ATP synthase. The cytochrome b-c1 complex catalyzes electron transfer from ubiquinol to cytochrome c, linking this redox reaction to translocation of protons across the mitochondrial inner membrane, with protons being carried across the membrane as hydrogens on the quinol. In the process called Q cycle, 2 protons are consumed from the matrix, 4 protons are released into the intermembrane space and 2 electrons are passed to cytochrome c. This chain is Cytochrome b-c1 complex subunit 2, mitochondrial (QCR2), found in Saccharomyces cerevisiae (strain ATCC 204508 / S288c) (Baker's yeast).